We begin with the raw amino-acid sequence, 287 residues long: MSDNTPWFEGIRFPMVCFSPEILREVRDKFLVKDEDTITVTYPKSGTNWLNEIVCLILSKGDPKLVQSVPNWDRSPWIEFTGGYELVKGQKDPRVYTSHLPLHLFPKSFFSSKAKVIYCIRNPRDALVSGYFFLSKMNVTEKPETLQQYMEWFLQGNVIYGSWFEHVRGWLSMREMENVLVLSYEDLIKDTRSTVEKICQFLGKKLKPEETDLVLKYSSFQFMKENEMSNFTLLPHAYTTEGFTLLRKGTVGDWKNHFTVAQAEAFDKIYQEKMAGYPPKLFSWEEC.

3'-phosphoadenylyl sulfate is bound at residue lysine 44–tryptophan 49. Substrate contacts are provided by tryptophan 72 and tryptophan 77. Histidine 99 serves as the catalytic Proton acceptor. 3'-phosphoadenylyl sulfate is bound by residues arginine 121, serine 129, tyrosine 184, serine 218–methionine 223, and arginine 247–glycine 249.

Belongs to the sulfotransferase 1 family. As to quaternary structure, homodimer. As to expression, adrenal gland and liver.

The protein localises to the cytoplasm. The enzyme catalyses an alcohol + 3'-phosphoadenylyl sulfate = an alkyl sulfate + adenosine 3',5'-bisphosphate + H(+). In terms of biological role, sulfotransferase that utilizes 3'-phospho-5'-adenylyl sulfate (PAPS) as sulfonate donor to catalyze the sulfonation of 3-alpha-hydroxyl groups of neutral steroids. This Cavia porcellus (Guinea pig) protein is 3-alpha-hydroxysteroid sulfotransferase (STD1).